The chain runs to 378 residues: Chaperone protein DnaJ (378 aa).

The 65-residue stretch at 3–67 (DFYDTLGVNR…EKRARYDQFG (65 aa)) folds into the J domain. Residues 132–214 (GQEREIKIPH…CGGQGVKQVR (83 aa)) form a CR-type zinc finger. Residues Cys145, Cys148, Cys162, Cys165, Cys188, Cys191, Cys202, and Cys205 each contribute to the Zn(2+) site. CXXCXGXG motif repeat units lie at residues 145 to 152 (CDVCRGTG), 162 to 169 (CSTCGGAG), 188 to 195 (CPTCSGSG), and 202 to 209 (CQSCGGQG).

The protein belongs to the DnaJ family. In terms of assembly, homodimer. The cofactor is Zn(2+).

The protein resides in the cytoplasm. Functionally, participates actively in the response to hyperosmotic and heat shock by preventing the aggregation of stress-denatured proteins and by disaggregating proteins, also in an autonomous, DnaK-independent fashion. Unfolded proteins bind initially to DnaJ; upon interaction with the DnaJ-bound protein, DnaK hydrolyzes its bound ATP, resulting in the formation of a stable complex. GrpE releases ADP from DnaK; ATP binding to DnaK triggers the release of the substrate protein, thus completing the reaction cycle. Several rounds of ATP-dependent interactions between DnaJ, DnaK and GrpE are required for fully efficient folding. Also involved, together with DnaK and GrpE, in the DNA replication of plasmids through activation of initiation proteins. The polypeptide is Chaperone protein DnaJ (Prochlorococcus marinus (strain SARG / CCMP1375 / SS120)).